The sequence spans 500 residues: Probable malate:quinone oxidoreductase (500 aa).

This sequence belongs to the MQO family. The cofactor is FAD.

It carries out the reaction (S)-malate + a quinone = a quinol + oxaloacetate. The protein operates within carbohydrate metabolism; tricarboxylic acid cycle; oxaloacetate from (S)-malate (quinone route): step 1/1. The protein is Probable malate:quinone oxidoreductase of Bacillus thuringiensis (strain Al Hakam).